Reading from the N-terminus, the 398-residue chain is Cyclin-dependent kinase D-1 (398 aa).

A Protein kinase domain is found at 11–291; it reads YLKREVLGQG…IQQALKHRYF (281 aa). Residues 17–25 and Lys40 contribute to the ATP site; that span reads LGQGTYGVV. Tyr22 carries the post-translational modification Phosphotyrosine. Residue Asp133 is the Proton acceptor of the active site. At Ser160 the chain carries Phosphoserine. A Phosphothreonine modification is found at Thr166. The tract at residues 296–318 is disordered; the sequence is SPTDPLKLPRPVSKQDAKSSDSK. Basic and acidic residues predominate over residues 308–318; that stretch reads SKQDAKSSDSK.

Belongs to the protein kinase superfamily. CMGC Ser/Thr protein kinase family. CDC2/CDKX subfamily. Post-translationally, autophosphorylated. In terms of tissue distribution, expressed at low levels in suspension cell culture, but not in plant organs.

Its subcellular location is the nucleus. It carries out the reaction L-seryl-[protein] + ATP = O-phospho-L-seryl-[protein] + ADP + H(+). The catalysed reaction is L-threonyl-[protein] + ATP = O-phospho-L-threonyl-[protein] + ADP + H(+). It catalyses the reaction [DNA-directed RNA polymerase] + ATP = phospho-[DNA-directed RNA polymerase] + ADP + H(+). In Arabidopsis thaliana (Mouse-ear cress), this protein is Cyclin-dependent kinase D-1 (CDKD-1).